A 241-amino-acid polypeptide reads, in one-letter code: FKBP-type peptidyl-prolyl cis-trans isomerase FkpA (241 aa).

Residues 153–241 enclose the PPIase FKBP-type domain; that stretch reads ETKITVHYKG…IELLDVVNGV (89 aa).

The protein belongs to the FKBP-type PPIase family.

It carries out the reaction [protein]-peptidylproline (omega=180) = [protein]-peptidylproline (omega=0). PPIases accelerate the folding of proteins. It catalyzes the cis-trans isomerization of proline imidic peptide bonds in oligopeptides. This is FKBP-type peptidyl-prolyl cis-trans isomerase FkpA (fkpA) from Buchnera aphidicola subsp. Acyrthosiphon pisum (strain APS) (Acyrthosiphon pisum symbiotic bacterium).